The sequence spans 432 residues: Bifunctional protein GlmU (432 aa).

The pyrophosphorylase stretch occupies residues 1–224 (MSEISVIILA…EENFMGINDK (224 aa)). Residues 9–12 (LAAG), K23, and 82–83 (GT) contribute to the UDP-N-acetyl-alpha-D-glucosamine site. Residue D103 participates in Mg(2+) binding. 4 residues coordinate UDP-N-acetyl-alpha-D-glucosamine: G136, E150, N165, and N222. Mg(2+) is bound at residue N222. Residues 225–245 (FALSKAETIIQNEIKENLMKN) form a linker region. The segment at 246 to 432 (GVLMRLPESI…FFAKFFKEIK (187 aa)) is N-acetyltransferase. The UDP-N-acetyl-alpha-D-glucosamine site is built by R309 and K326. The active-site Proton acceptor is H337. Residues Y340 and N351 each contribute to the UDP-N-acetyl-alpha-D-glucosamine site. Acetyl-CoA contacts are provided by residues 360 to 361 (NY), S379, A397, and R414.

It in the N-terminal section; belongs to the N-acetylglucosamine-1-phosphate uridyltransferase family. This sequence in the C-terminal section; belongs to the transferase hexapeptide repeat family. In terms of assembly, homotrimer. Mg(2+) is required as a cofactor.

The protein resides in the cytoplasm. It carries out the reaction alpha-D-glucosamine 1-phosphate + acetyl-CoA = N-acetyl-alpha-D-glucosamine 1-phosphate + CoA + H(+). It catalyses the reaction N-acetyl-alpha-D-glucosamine 1-phosphate + UTP + H(+) = UDP-N-acetyl-alpha-D-glucosamine + diphosphate. The protein operates within nucleotide-sugar biosynthesis; UDP-N-acetyl-alpha-D-glucosamine biosynthesis; N-acetyl-alpha-D-glucosamine 1-phosphate from alpha-D-glucosamine 6-phosphate (route II): step 2/2. It functions in the pathway nucleotide-sugar biosynthesis; UDP-N-acetyl-alpha-D-glucosamine biosynthesis; UDP-N-acetyl-alpha-D-glucosamine from N-acetyl-alpha-D-glucosamine 1-phosphate: step 1/1. Its pathway is bacterial outer membrane biogenesis; LPS lipid A biosynthesis. Functionally, catalyzes the last two sequential reactions in the de novo biosynthetic pathway for UDP-N-acetylglucosamine (UDP-GlcNAc). The C-terminal domain catalyzes the transfer of acetyl group from acetyl coenzyme A to glucosamine-1-phosphate (GlcN-1-P) to produce N-acetylglucosamine-1-phosphate (GlcNAc-1-P), which is converted into UDP-GlcNAc by the transfer of uridine 5-monophosphate (from uridine 5-triphosphate), a reaction catalyzed by the N-terminal domain. The sequence is that of Bifunctional protein GlmU from Campylobacter hominis (strain ATCC BAA-381 / DSM 21671 / CCUG 45161 / LMG 19568 / NCTC 13146 / CH001A).